The primary structure comprises 372 residues: 4-hydroxy-3-methylbut-2-en-1-yl diphosphate synthase (flavodoxin) (372 aa).

Cys-270, Cys-273, Cys-305, and Glu-312 together coordinate [4Fe-4S] cluster.

It belongs to the IspG family. Requires [4Fe-4S] cluster as cofactor.

It carries out the reaction (2E)-4-hydroxy-3-methylbut-2-enyl diphosphate + oxidized [flavodoxin] + H2O + 2 H(+) = 2-C-methyl-D-erythritol 2,4-cyclic diphosphate + reduced [flavodoxin]. Its pathway is isoprenoid biosynthesis; isopentenyl diphosphate biosynthesis via DXP pathway; isopentenyl diphosphate from 1-deoxy-D-xylulose 5-phosphate: step 5/6. Its function is as follows. Converts 2C-methyl-D-erythritol 2,4-cyclodiphosphate (ME-2,4cPP) into 1-hydroxy-2-methyl-2-(E)-butenyl 4-diphosphate. The chain is 4-hydroxy-3-methylbut-2-en-1-yl diphosphate synthase (flavodoxin) from Shigella dysenteriae serotype 1 (strain Sd197).